The primary structure comprises 548 residues: Chaperonin GroEL (548 aa).

ATP contacts are provided by residues 29 to 32 (TLGP), lysine 50, 86 to 90 (DGTTT), glycine 416, and aspartate 497.

The protein belongs to the chaperonin (HSP60) family. Forms a cylinder of 14 subunits composed of two heptameric rings stacked back-to-back. Interacts with the co-chaperonin GroES.

The protein localises to the cytoplasm. It catalyses the reaction ATP + H2O + a folded polypeptide = ADP + phosphate + an unfolded polypeptide.. Functionally, together with its co-chaperonin GroES, plays an essential role in assisting protein folding. The GroEL-GroES system forms a nano-cage that allows encapsulation of the non-native substrate proteins and provides a physical environment optimized to promote and accelerate protein folding. The polypeptide is Chaperonin GroEL (Neorickettsia risticii (Ehrlichia risticii)).